Reading from the N-terminus, the 374-residue chain is Polar flagellin E (374 aa).

Residues 102–126 (SHEQDDRKSLQQEVIALQDELDRVA) are a coiled coil.

This sequence belongs to the bacterial flagellin family. As to quaternary structure, heteromer of multiple flagellin subunits including FlaA, FlaB/D, FlaC, FlaE and FlaF.

The protein resides in the secreted. Its subcellular location is the bacterial flagellum. Flagellin is the subunit protein which polymerizes to form the filaments of bacterial flagella. This is Polar flagellin E (flaE) from Vibrio parahaemolyticus serotype O3:K6 (strain RIMD 2210633).